The chain runs to 421 residues: Gamma-glutamyl phosphate reductase (421 aa).

It belongs to the gamma-glutamyl phosphate reductase family.

It is found in the cytoplasm. It carries out the reaction L-glutamate 5-semialdehyde + phosphate + NADP(+) = L-glutamyl 5-phosphate + NADPH + H(+). Its pathway is amino-acid biosynthesis; L-proline biosynthesis; L-glutamate 5-semialdehyde from L-glutamate: step 2/2. Its function is as follows. Catalyzes the NADPH-dependent reduction of L-glutamate 5-phosphate into L-glutamate 5-semialdehyde and phosphate. The product spontaneously undergoes cyclization to form 1-pyrroline-5-carboxylate. In Herminiimonas arsenicoxydans, this protein is Gamma-glutamyl phosphate reductase.